The chain runs to 811 residues: Myb-like DNA-binding protein BAS1 (811 aa).

Residues 34-110 (HRKNGRNSWS…DVRKRWTGSL (77 aa)) form the Myb-like domain. HTH myb-type domains lie at 111–165 (DPNL…GPGS) and 166–218 (KGRL…TMVV). DNA-binding regions (H-T-H motif) lie at residues 138-161 (WLSI…IEVL) and 191-214 (WRKI…RKII). The span at 237-264 (DMTDGKLRQHPIADSDIRSDSTPNKEEQ) shows a compositional bias: basic and acidic residues. Disordered stretches follow at residues 237-320 (DMTD…SAPP), 348-379 (SQMN…DEHM), 535-713 (ATSH…LRDE), and 782-811 (LHNE…LNPS). Residues 265–275 (LQLSQQNNPSL) are compositionally biased toward low complexity. Residues 282–298 (NVKENESSKLPRLKDND) are compositionally biased toward basic and acidic residues. 3 stretches are compositionally biased toward polar residues: residues 348–366 (SQMN…QTSL), 535–613 (ATSH…TSGS), and 653–664 (LNPSPNSVRSNG). Residues 782 to 794 (LHNEAKKTSEHDM) show a composition bias toward basic and acidic residues.

Monomer.

It is found in the nucleus. Activates HIS4 transcription only in combination with PHO2/BAS2. BAS1 is also involved in the regulation of the purine biosynthesis pathway. This is Myb-like DNA-binding protein BAS1 (BAS1) from Saccharomyces cerevisiae (strain ATCC 204508 / S288c) (Baker's yeast).